The chain runs to 877 residues: Alanine--tRNA ligase (877 aa).

4 residues coordinate Zn(2+): His-567, His-571, Cys-669, and His-673.

The protein belongs to the class-II aminoacyl-tRNA synthetase family. Zn(2+) is required as a cofactor.

It is found in the cytoplasm. It catalyses the reaction tRNA(Ala) + L-alanine + ATP = L-alanyl-tRNA(Ala) + AMP + diphosphate. Its function is as follows. Catalyzes the attachment of alanine to tRNA(Ala) in a two-step reaction: alanine is first activated by ATP to form Ala-AMP and then transferred to the acceptor end of tRNA(Ala). Also edits incorrectly charged Ser-tRNA(Ala) and Gly-tRNA(Ala) via its editing domain. This Lactobacillus delbrueckii subsp. bulgaricus (strain ATCC 11842 / DSM 20081 / BCRC 10696 / JCM 1002 / NBRC 13953 / NCIMB 11778 / NCTC 12712 / WDCM 00102 / Lb 14) protein is Alanine--tRNA ligase.